The chain runs to 283 residues: Nucleoid occlusion protein (283 aa).

Positions 1–21 (MKHSFSRFFGFGEKEEEPEIA) are disordered. Positions 148–167 (EALAQRLGKGQSTIANKLRL) form a DNA-binding region, H-T-H motif.

This sequence belongs to the ParB family.

Its subcellular location is the cytoplasm. The protein resides in the nucleoid. Its function is as follows. Effects nucleoid occlusion by binding relatively nonspecifically to DNA and preventing the assembly of the division machinery in the vicinity of the nucleoid, especially under conditions that disturb the cell cycle. It helps to coordinate cell division and chromosome segregation by preventing the formation of the Z ring through the nucleoid, which would cause chromosome breakage. The protein is Nucleoid occlusion protein of Bacillus velezensis (strain DSM 23117 / BGSC 10A6 / LMG 26770 / FZB42) (Bacillus amyloliquefaciens subsp. plantarum).